Here is a 295-residue protein sequence, read N- to C-terminus: Ribosomal RNA small subunit methyltransferase A (295 aa).

S-adenosyl-L-methionine contacts are provided by N29, L31, G56, E77, D102, and N127.

The protein belongs to the class I-like SAM-binding methyltransferase superfamily. rRNA adenine N(6)-methyltransferase family. RsmA subfamily.

It is found in the cytoplasm. The enzyme catalyses adenosine(1518)/adenosine(1519) in 16S rRNA + 4 S-adenosyl-L-methionine = N(6)-dimethyladenosine(1518)/N(6)-dimethyladenosine(1519) in 16S rRNA + 4 S-adenosyl-L-homocysteine + 4 H(+). In terms of biological role, specifically dimethylates two adjacent adenosines (A1518 and A1519) in the loop of a conserved hairpin near the 3'-end of 16S rRNA in the 30S particle. May play a critical role in biogenesis of 30S subunits. This is Ribosomal RNA small subunit methyltransferase A from Anoxybacillus flavithermus (strain DSM 21510 / WK1).